Reading from the N-terminus, the 647-residue chain is Beta-glucosidase-like SFR2, chloroplastic (647 aa).

The disordered stretch occupies residues 116-140; it reads SAAGDGGSQQSWRSTGGENIGDREQ. Residues 123 to 132 are compositionally biased toward polar residues; sequence SQQSWRSTGG. N-linked (GlcNAc...) asparagine glycosylation occurs at Asn169. Residues His258, 302-303, Tyr414, Glu466, Trp504, 511-512, and Phe520 contribute to the a beta-D-glucoside site; these read NE and EW. Glu303 (proton donor) is an active-site residue. Glu466 (nucleophile) is an active-site residue.

It belongs to the glycosyl hydrolase 1 family.

The protein resides in the plastid. The protein localises to the chloroplast outer membrane. The catalysed reaction is 2 a 1,2-diacyl-3-O-(beta-D-galactosyl)-sn-glycerol = a 1,2-diacyl-3-O-[beta-D-galactosyl-(1-&gt;6)-beta-D-galactosyl]-sn-glycerol + a 1,2-diacyl-sn-glycerol. Galactosyltransferase synthesizing digalactosyldiacylglycerol from monogalactosyldiacylglycerol in the absence of UDP-galactose. Potentially involved in freezing tolerance. In Oryza sativa subsp. japonica (Rice), this protein is Beta-glucosidase-like SFR2, chloroplastic.